The following is a 319-amino-acid chain: MEAPTYSSKQVAEMLGVSPKQIPEESRKDAYTPDDIWELRTTLDRFPARLGHRRQLFLNFKGGTGKTSLSTSYAWRLAELGYAVLLIDLDSQGHATKCLGYEGEDFEKTLLDVLVRKTPLAKVIQKSSLPNLDFVPSNLTMSTVDLALMPMAGREFKLRNALKDVEAQYDVVVFDAPPSFGLLNLNALMAANDLFVPVLADFLSFHGLKLLFETVQSLEEDLNHVLDHVFIVVNSFNATFKLAKEALEALQTHYPEFLLPTIIRQCTKFAQASSEGRPVFVADPSSKGANDIQAMIDNILPRLVAAAAVAQTKGTQQAG.

Lysine 61 to serine 68 lines the ATP pocket.

It belongs to the ParA family. In terms of assembly, interacts with FtsZ in pull-down experiments.

The protein resides in the cytoplasm. Spatial regulator of cell division that is involved in identifying the incipient division site, recruiting FtsZ to the division site and stabilizing the Z-ring. Binds ATP and GTP. The protein is Cell division protein PomZ of Myxococcus xanthus (strain DK1622).